The following is a 62-amino-acid chain: Glucagon (62 aa).

Belongs to the glucagon family.

The protein resides in the secreted. Functionally, promotes hydrolysis of glycogen and lipids, and raises the blood sugar level. This Scyliorhinus canicula (Small-spotted catshark) protein is Glucagon (gcg).